The chain runs to 263 residues: Endonuclease 8 (263 aa).

The active-site Schiff-base intermediate with DNA is P2. The Proton donor role is filled by E3. The Proton donor; for beta-elimination activity role is filled by K53. 3 residues coordinate DNA: Q70, R125, and N169. An FPG-type zinc finger spans residues 229–263 (KVFHRDGEPCERCGSIIEKTTLSSRPFYWCPGCQH). Catalysis depends on R253, which acts as the Proton donor; for delta-elimination activity.

The protein belongs to the FPG family. The cofactor is Zn(2+).

It catalyses the reaction 2'-deoxyribonucleotide-(2'-deoxyribose 5'-phosphate)-2'-deoxyribonucleotide-DNA = a 3'-end 2'-deoxyribonucleotide-(2,3-dehydro-2,3-deoxyribose 5'-phosphate)-DNA + a 5'-end 5'-phospho-2'-deoxyribonucleoside-DNA + H(+). Involved in base excision repair of DNA damaged by oxidation or by mutagenic agents. Acts as a DNA glycosylase that recognizes and removes damaged bases. Has a preference for oxidized pyrimidines, such as thymine glycol, 5,6-dihydrouracil and 5,6-dihydrothymine. Has AP (apurinic/apyrimidinic) lyase activity and introduces nicks in the DNA strand. Cleaves the DNA backbone by beta-delta elimination to generate a single-strand break at the site of the removed base with both 3'- and 5'-phosphates. The protein is Endonuclease 8 of Escherichia coli O9:H4 (strain HS).